The sequence spans 375 residues: uncharacterized protein (375 aa).

It belongs to the IMPDH/GMPR family.

This is an uncharacterized protein from Mycobacterium leprae (strain TN).